The following is a 168-amino-acid chain: Group 2 truncated hemoglobin 3-1 (168 aa).

Position 98 (His98) interacts with heme b.

This sequence belongs to the truncated hemoglobin family. Group II subfamily. As to quaternary structure, homodimer when ferric. Mainly expressed in root nodules, but barely in leaves, roots, stems, flowers and fruits.

Its function is as follows. Hemoglobin-like protein that exhibits an unusual concentration-independent binding of O(2) and CO. Required for general plant development and during nodulation. May promote shoot organogenesis from root explants. This Lotus japonicus (Lotus corniculatus var. japonicus) protein is Group 2 truncated hemoglobin 3-1.